Here is a 260-residue protein sequence, read N- to C-terminus: Creatinine amidohydrolase (260 aa).

Glu34 contacts Mn(2+). Residues Glu34, His36, and Asp45 each coordinate Zn(2+). Residue Asp45 coordinates Mn(2+). Ser78 provides a ligand contact to creatine. His120 contributes to the Mn(2+) binding site. His120 contacts Zn(2+). Creatine contacts are provided by Tyr121, Trp174, Asp175, and His178. Glu183 serves as a coordination point for Zn(2+).

It belongs to the creatininase superfamily. Homohexamer; trimer of dimers. Zn(2+) serves as cofactor. Mn(2+) is required as a cofactor.

It carries out the reaction creatinine + H2O = creatine. It functions in the pathway amine and polyamine degradation; creatinine degradation. Its activity is regulated as follows. Is markedly inactivated in vitro by heavy metal ions, N-bromosuccinimide, ethoxyformic anhydride, and dye-sensitized photooxidation. In terms of biological role, cyclic amidohydrolase that catalyzes the reversible conversion of creatinine to creatine. Is also active toward glycocyamidine, though the reaction rate is very low, but it is completely inert toward hydantoin and its derivatives. The sequence is that of Creatinine amidohydrolase (crnA) from Pseudomonas putida (Arthrobacter siderocapsulatus).